Consider the following 479-residue polypeptide: Aspartyl/glutamyl-tRNA(Asn/Gln) amidotransferase subunit B (479 aa).

Belongs to the GatB/GatE family. GatB subfamily. Heterotrimer of A, B and C subunits.

The catalysed reaction is L-glutamyl-tRNA(Gln) + L-glutamine + ATP + H2O = L-glutaminyl-tRNA(Gln) + L-glutamate + ADP + phosphate + H(+). It catalyses the reaction L-aspartyl-tRNA(Asn) + L-glutamine + ATP + H2O = L-asparaginyl-tRNA(Asn) + L-glutamate + ADP + phosphate + 2 H(+). Its function is as follows. Allows the formation of correctly charged Asn-tRNA(Asn) or Gln-tRNA(Gln) through the transamidation of misacylated Asp-tRNA(Asn) or Glu-tRNA(Gln) in organisms which lack either or both of asparaginyl-tRNA or glutaminyl-tRNA synthetases. The reaction takes place in the presence of glutamine and ATP through an activated phospho-Asp-tRNA(Asn) or phospho-Glu-tRNA(Gln). The chain is Aspartyl/glutamyl-tRNA(Asn/Gln) amidotransferase subunit B from Geotalea daltonii (strain DSM 22248 / JCM 15807 / FRC-32) (Geobacter daltonii).